Reading from the N-terminus, the 254-residue chain is Glutamate racemase (254 aa).

Residues 7-8 (DS) and 39-40 (YG) contribute to the substrate site. Cysteine 70 (proton donor/acceptor) is an active-site residue. 71 to 72 (NT) contributes to the substrate binding site. Cysteine 178 functions as the Proton donor/acceptor in the catalytic mechanism. Residue 179–180 (TH) coordinates substrate.

The protein belongs to the aspartate/glutamate racemases family.

It carries out the reaction L-glutamate = D-glutamate. It participates in cell wall biogenesis; peptidoglycan biosynthesis. Functionally, provides the (R)-glutamate required for cell wall biosynthesis. In Aquifex aeolicus (strain VF5), this protein is Glutamate racemase.